Reading from the N-terminus, the 267-residue chain is MVVVAAAPSAASAAPKVLLLSGQPASGGRALPLMVPGPRAAGSEASGTPQARKRQRLTHLSPEEKALRRKLKNRVAAQTARDRKKARMSELEQQVVDLEEENQKLQLENQLLREKTHGLVIENQELRTRLGMNALVTEEVSEAESKGNGVRLVAGSAESAALRLRAPLQQVQAQLSPPQNIFPWILTLLPLQILSLISFWAFWTSWTLSCFSNVLPQSLLIWRNSQRSTQKDLVPYQPPFLCQWGPHQPSWKPLMNSFVLTMYTPSL.

Residues 1–180 (MVVVAAAPSA…VQAQLSPPQN (180 aa)) lie on the Cytoplasmic side of the membrane. Residues 35–60 (VPGPRAAGSEASGTPQARKRQRLTHL) are disordered. Position 61 is a phosphoserine (S61). Residues 63-126 (EEKALRRKLK…HGLVIENQEL (64 aa)) form the bZIP domain. The interval 65 to 87 (KALRRKLKNRVAAQTARDRKKAR) is basic motif. Positions 69-85 (RKLKNRVAAQTARDRKK) are nuclear localization signal (NLS). A leucine-zipper region spans residues 91-126 (LEQQVVDLEEENQKLQLENQLLREKTHGLVIENQEL). The helical; Signal-anchor for type II membrane protein transmembrane segment at 181–198 (IFPWILTLLPLQILSLIS) threads the bilayer. Over 199–267 (FWAFWTSWTL…FVLTMYTPSL (69 aa)) the chain is Lumenal.

This sequence belongs to the bZIP family. As to quaternary structure, isoform 1 interacts with HM13. Isoform 1 interacts with RNF139; the interaction induces ubiquitination and degradation of isoform 1. Isoform 1 interacts (via luminal domain) with DERL1; the interaction obviates the need for ectodomain shedding prior HM13/SPP-mediated XBP1 isoform 1 cleavage. Isoform 1 interacts with HDAC3 and AKT1; the interactions occur in endothelial cell (EC) under disturbed flow. Isoform 1 interacts with the oncoprotein FOS. Interacts with SIRT1. In terms of processing, isoform 1 is ubiquitinated, leading to proteasome-mediated degradation in response to ER stress. Post-translationally, X-box-binding protein 1, cytoplasmic form and luminal form are produced by intramembrane proteolytic cleavage of ER membrane-anchored isoform 1 triggered by HM13/SPP in a DERL1-RNF139-dependent and VCP/p97-independent manner. X-box-binding protein 1, luminal form is ubiquitinated leading to proteasomal degradation. Acetylated by EP300; acetylation positively regulates the transcriptional activity of XBP1. Deacetylated by SIRT1; deacetylation negatively regulates the transcriptional activity of XBP1.

It is found in the nucleus. Its subcellular location is the endoplasmic reticulum. It localises to the cytoplasm. The protein resides in the endoplasmic reticulum membrane. The protein localises to the membrane. In terms of biological role, functions as a transcription factor during endoplasmic reticulum (ER) stress by regulating the unfolded protein response (UPR). Required for cardiac myogenesis and hepatogenesis during embryonic development, and the development of secretory tissues such as exocrine pancreas and salivary gland. Involved in terminal differentiation of B lymphocytes to plasma cells and production of immunoglobulins. Modulates the cellular response to ER stress in a PIK3R-dependent manner. Binds to the cis-acting X box present in the promoter regions of major histocompatibility complex class II genes. Involved in VEGF-induced endothelial cell (EC) proliferation and retinal blood vessel formation during embryonic development but also for angiogenesis in adult tissues under ischemic conditions. Functions also as a major regulator of the UPR in obesity-induced insulin resistance and type 2 diabetes for the management of obesity and diabetes prevention. Acts as a weak transcriptional factor. Together with HDAC3, contributes to the activation of NFE2L2-mediated HMOX1 transcription factor gene expression in a PI(3)K/mTORC2/Akt-dependent signaling pathway leading to EC survival under disturbed flow/oxidative stress. Binds to the ER stress response element (ERSE) upon ER stress. Binds to the consensus 5'-GATGACGTG[TG]N(3)[AT]T-3' sequence related to cAMP responsive element (CRE)-like sequences. Associates preferentially to the HDAC3 gene promoter region in a static flow-dependent manner. Binds to the CDH5/VE-cadherin gene promoter region. The polypeptide is X-box-binding protein 1 (Rattus norvegicus (Rat)).